Consider the following 61-residue polypeptide: Small ribosomal subunit protein uS14 (61 aa).

Zn(2+) is bound by residues Cys24, Cys27, Cys40, and Cys43.

Belongs to the universal ribosomal protein uS14 family. Zinc-binding uS14 subfamily. In terms of assembly, part of the 30S ribosomal subunit. Contacts proteins S3 and S10. The cofactor is Zn(2+).

Binds 16S rRNA, required for the assembly of 30S particles and may also be responsible for determining the conformation of the 16S rRNA at the A site. This Mycoplasma mobile (strain ATCC 43663 / 163K / NCTC 11711) (Mesomycoplasma mobile) protein is Small ribosomal subunit protein uS14.